The following is a 1092-amino-acid chain: Myelin regulatory factor (1092 aa).

Topologically, residues 1–730 are cytoplasmic; the sequence is MDVEDENETL…CVSQRFLQAT (730 aa). Disordered stretches follow at residues 145–168, 187–210, and 258–282; these read SYAAGTLPDSPPDSGSEAYSPQQL, PPSRLEHPPPPHLQGPLPPHSIHQ, and QQHGAELPVHPSKKRKHSDSPTNTL. The span at 196–205 shows a compositional bias: pro residues; that stretch reads PPHLQGPLPP. The segment at residues 246 to 507 is a DNA-binding region (NDT80); it reads AQQSQMLHQL…SNPGQFESDS (262 aa). One can recognise a Peptidase S74 domain in the interval 553–662; the sequence is SDIRAKESVE…KLTDNLETRI (110 aa). Positions 646–677 form a coiled coil; that stretch reads GAVKELCKLTDNLETRIDELERWSHKLAKLRR. Over residues 681 to 695 the composition is skewed to polar residues; that stretch reads MKSTNSHTGSSQFSR. The disordered stretch occupies residues 681-714; that stretch reads MKSTNSHTGSSQFSRAGSVPYKQRPPKVMGKTVP. Residues 731-751 traverse the membrane as a helical segment; the sequence is IIALVIIMAFSVISMTTLYVL. The Lumenal segment spans residues 752-1092; that stretch reads NLRSEDDMLG…YYFRFYRLCD (341 aa). Disordered regions lie at residues 798–817 and 849–945; these read TTQLKGNTTPPPKITKSPDW and ITRK…DSRY. Polar residues-rich tracts occupy residues 849–867 and 928–945; these read ITRKTSAASAETISQTDPA and TPITPMDRTQGNSNDSRY. 4 N-linked (GlcNAc...) asparagine glycosylation sites follow: asparagine 941, asparagine 961, asparagine 974, and asparagine 996.

This sequence belongs to the MRF family. As to quaternary structure, homotrimer. In terms of processing, follows autocatalytic cleavage via the peptidase S74 domain. Autoprocessing is apparently constitutive and is essential for transcriptional activity.

The protein resides in the endoplasmic reticulum membrane. Its subcellular location is the nucleus. It localises to the cytoplasm. In terms of biological role, constitutes a precursor of the transcription factor. Mediates the autocatalytic cleavage that releases the Myelin regulatory factor, N-terminal component that specifically activates transcription of central nervous system (CNS) myelin genes. Membrane-bound part that has no transcription factor activity and remains attached to the endoplasmic reticulum membrane following cleavage. Its function is as follows. Transcription factor that specifically activates expression of myelin genes during oligodendrocyte (OL) maturation, thereby playing a central role in oligodendrocyte maturation and CNS myelination. The polypeptide is Myelin regulatory factor (myrf) (Xenopus laevis (African clawed frog)).